The chain runs to 450 residues: Probable ECA polymerase (450 aa).

11 helical membrane passes run 6–26 (FSGLFVVWLLCTLFIATLTWF), 37–57 (VFFSLLFLLTFFFGFPLTSVL), 63–83 (VGVAPPEILLQVLLSAGCFYA), 118–138 (VILMGIALVSVGIFFMHNGFL), 155–175 (GVALKRFFYFFIPAMLVVYFL), 181–201 (AWLFFLVSTVAFGLLTYMIVG), 207–227 (IIIAFAIFLFIGIIRGWISLW), 228–248 (MLAAAGVLGIVGMFWLALKRY), 341–361 (LVVMGGALFIPLGAIVVGLII), 378–398 (YKAAILHSFCFGAIFNMIVLA), and 410–430 (VFFIVVFGACLMIAKLLYWLF).

This sequence belongs to the WzyE family. Probably part of a complex composed of WzxE, WzyE and WzzE.

It is found in the cell inner membrane. Its pathway is bacterial outer membrane biogenesis; enterobacterial common antigen biosynthesis. Probably involved in the polymerization of enterobacterial common antigen (ECA) trisaccharide repeat units. This is Probable ECA polymerase from Shigella flexneri.